The following is a 458-amino-acid chain: RuvB-like helicase 1 (458 aa).

71–78 (GGPGTGKT) is a binding site for ATP.

The protein belongs to the RuvB family. In terms of assembly, may form heterododecamers with hel-2/rvb2. Component of the SWR1 chromatin remodeling complex, the INO80 chromatin remodeling complex, and of the R2TP complex.

Its subcellular location is the nucleus. It catalyses the reaction ATP + H2O = ADP + phosphate + H(+). DNA helicase which participates in several chromatin remodeling complexes, including the SWR1 and the INO80 complexes. The SWR1 complex mediates the ATP-dependent exchange of histone H2A for the H2A variant H2A.Z leading to transcriptional regulation of selected genes by chromatin remodeling. The INO80 complex remodels chromatin by shifting nucleosomes and is involved in DNA repair. Also involved in pre-rRNA processing. This chain is RuvB-like helicase 1 (hel-1), found in Neurospora crassa (strain ATCC 24698 / 74-OR23-1A / CBS 708.71 / DSM 1257 / FGSC 987).